Here is a 721-residue protein sequence, read N- to C-terminus: Translation initiation factor eIF2B subunit epsilon (721 aa).

Residues M1–P40 form a disordered region. The residue at position 2 (A2) is an N-acetylalanine. R19 carries the omega-N-methylarginine modification. Over residues R19–R33 the composition is skewed to gly residues. Residues K61 and K103 each participate in a glycyl lysine isopeptide (Lys-Gly) (interchain with G-Cter in ubiquitin) cross-link. At S130 the chain carries Phosphoserine. Residues K141 and K217 each participate in a glycyl lysine isopeptide (Lys-Gly) (interchain with G-Cter in ubiquitin) cross-link. T322 bears the Phosphothreonine mark. Disordered stretches follow at residues G446–A478 and L517–P545. The residue at position 450 (S450) is a Phosphoserine. A compositionally biased stretch (acidic residues) spans A456–F465. Phosphoserine occurs at positions 466, 469, 532, and 540. Residues E528 to S540 are compositionally biased toward basic and acidic residues. A W2 domain is found at G543 to D720. A Phosphoserine; by DYRK2 modification is found at S544. S717 carries the post-translational modification Phosphoserine.

This sequence belongs to the eIF-2B gamma/epsilon subunits family. Component of the translation initiation factor 2B (eIF2B) complex which is a heterodecamer of two sets of five different subunits: alpha, beta, gamma, delta and epsilon. Subunits alpha, beta and delta comprise a regulatory subcomplex and subunits epsilon and gamma comprise a catalytic subcomplex. Within the complex, the hexameric regulatory complex resides at the center, with the two heterodimeric catalytic subcomplexes bound on opposite sides. In terms of processing, phosphorylated at Ser-544 by DYRK2; this is required for subsequent phosphorylation by GSK3B. Phosphorylated on serine and threonine residues by GSK3B; phosphorylation inhibits its function. Post-translationally, polyubiquitinated, probably by NEDD4. Ubiquitously expressed.

The protein resides in the cytoplasm. Its subcellular location is the cytosol. Activated by the chemical integrated stress response (ISR) inhibitor ISRIB which stimulates guanine nucleotide exchange factor activity for both phosphorylated and unphosphorylated eIF2. Its function is as follows. Acts as a component of the translation initiation factor 2B (eIF2B) complex, which catalyzes the exchange of GDP for GTP on eukaryotic initiation factor 2 (eIF2) gamma subunit. Its guanine nucleotide exchange factor activity is repressed when bound to eIF2 complex phosphorylated on the alpha subunit, thereby limiting the amount of methionyl-initiator methionine tRNA available to the ribosome and consequently global translation is repressed. The sequence is that of Translation initiation factor eIF2B subunit epsilon (EIF2B5) from Oryctolagus cuniculus (Rabbit).